Consider the following 448-residue polypeptide: Homogentisate 1,2-dioxygenase (448 aa).

His303 serves as the catalytic Proton acceptor. The Fe cation site is built by His346 and Glu352. Residues Tyr361 and His382 each contribute to the homogentisate site. His382 is a binding site for Fe cation.

This sequence belongs to the homogentisate dioxygenase family. In terms of assembly, hexamer; dimer of trimers. It depends on Fe cation as a cofactor.

The catalysed reaction is homogentisate + O2 = 4-maleylacetoacetate + H(+). Its pathway is amino-acid degradation; L-phenylalanine degradation; acetoacetate and fumarate from L-phenylalanine: step 4/6. Involved in the catabolism of homogentisate (2,5-dihydroxyphenylacetate or 2,5-OH-PhAc), a central intermediate in the degradation of phenylalanine and tyrosine. Catalyzes the oxidative ring cleavage of the aromatic ring of homogentisate to yield maleylacetoacetate. The protein is Homogentisate 1,2-dioxygenase of Rhodopseudomonas palustris (strain BisB5).